We begin with the raw amino-acid sequence, 249 residues long: Probable phosphatase Shal_1519 (249 aa).

The Zn(2+) site is built by H8, H10, H16, H41, E74, H102, H132, D193, and H195.

Belongs to the PHP family. Zn(2+) is required as a cofactor.

In Shewanella halifaxensis (strain HAW-EB4), this protein is Probable phosphatase Shal_1519.